Here is a 669-residue protein sequence, read N- to C-terminus: Phosphatidylinositol-3-phosphate phosphatase MTMR1 (669 aa).

N-acetylmethionine is present on Met-1. The segment covering 1-17 (MDRPVAAAAAASAASCE) has biased composition (low complexity). The interval 1 to 55 (MDRPVAAAAAASAASCEGAGGPGPGPGASWRPSRVAGGASASSRHPSIETLDSPT) is disordered. Ser-47 and Ser-53 each carry phosphoserine. Positions 94-165 (NKLAQMEEAP…GVISRVEKIG (72 aa)) constitute a GRAM domain. One can recognise a Myotubularin phosphatase domain in the interval 230 to 605 (GWKVYDPVSE…SHLELWVNYY (376 aa)). The a 1,2-diacyl-sn-glycero-3-phospho-(1D-myo-inositol-3-phosphate) site is built by Asn-355, Asn-380, and Ile-381. Cys-442 (phosphocysteine intermediate) is an active-site residue. 7 residues coordinate a 1,2-diacyl-sn-glycero-3-phospho-(1D-myo-inositol-3-phosphate): Ser-443, Asp-444, Gly-445, Trp-446, Asp-447, Arg-448, and Arg-488. Ser-443 lines the phosphate pocket. Phosphate contacts are provided by Gly-445, Trp-446, Asp-447, and Arg-448. The tract at residues 612–669 (MRPQMPIHQNLKELLAIKAELQKRVEDLQREMATRTISSSSERGSSPTHSATPVHTSV) is required for dimerization. The disordered stretch occupies residues 644-669 (ATRTISSSSERGSSPTHSATPVHTSV). A compositionally biased stretch (low complexity) spans 649 to 661 (SSSSERGSSPTHS).

Belongs to the protein-tyrosine phosphatase family. Non-receptor class myotubularin subfamily. In terms of assembly, homodimer. As to expression, widely expressed. Detected in skeletal muscle, heart, lung, liver and brain.

It is found in the cell membrane. It localises to the cytoplasm. It carries out the reaction a 1,2-diacyl-sn-glycero-3-phospho-(1D-myo-inositol-3-phosphate) + H2O = a 1,2-diacyl-sn-glycero-3-phospho-(1D-myo-inositol) + phosphate. It catalyses the reaction 1,2-dioctanoyl-sn-glycero-3-phospho-(1-D-myo-inositol-3-phosphate) + H2O = 1,2-dioctanoyl-sn-glycero-3-phospho-(1D-myo-inositol) + phosphate. The enzyme catalyses a 1,2-diacyl-sn-glycero-3-phospho-(1D-myo-inositol-3,5-bisphosphate) + H2O = a 1,2-diacyl-sn-glycero-3-phospho-(1D-myo-inositol-5-phosphate) + phosphate. In terms of biological role, lipid phosphatase that specifically dephosphorylates the D-3 position of phosphatidylinositol 3-phosphate, generating phosphatidylinositol. Could also dephosphorylate phosphatidylinositol 3,5-bisphosphate to produce phosphatidylinositol 5-phosphate. In Mus musculus (Mouse), this protein is Phosphatidylinositol-3-phosphate phosphatase MTMR1.